The following is a 1316-amino-acid chain: Tetratricopeptide repeat protein 21B (1316 aa).

19 TPR repeats span residues 108–141 (EKALYHAGLFLWHIGRHDKAREYIDRMIKISDGS), 145–178 (HVLKAWLDITRGKEPYTKKALKYFEEGLQDGNDT), 180–211 (ALLGKAQCLEMRQNYSGALETVNQIIVNFPSF), 285–323 (AQLFYNITLAFSRTCGRSQLILQKIQTLLERAFSLNPQQ), 324–357 (SEFATELGYQMILQGRVKEALKWYKTAMTLDETS), 492–525 (LQTVFLIAKVKYLSGDIEAAFNNLQHCLEHNPSY), 563–596 (PLYHLIKAQSQKKMGEIADAIKTLHMAMSLPGMK), 617–650 (LSIFLELIDVHRLNGEQHEATKVLQDAIHEFSGT), 722–755 (PRSFLLLGDAYMNILEPEEAIVAYEQALNQNPKD), 757–789 (TLASKMGKALIKTHNYSMAITYYEAALKTGQKN), 791–822 (LCYDLAELLLKLKWYDKAEKVLQHALAHEPVN), 831–864 (GRCQVLLAKVYSKMEKLGDAITALQQARELQARV), 884–917 (AEICAEIAKHSVAQRDYEKAIKFYREALVHCETD), 919–951 (KIMLELARLYLAQDDPDSCLRQCALLLQSDQDN), 952–985 (EAATMMMADLMFRKQDYEQAVFHLQQLLERKPDN), 1023–1056 (PGFQYCKGLYLWYTGEPNDALRHFNKARKDRDWG), 1197–1230 (EKSWLLLADIYIQSAKYDMAEDLLKRCLRHNRSC), 1232–1264 (KAYEYMGYIMEKEQAYTDAALNYEMAWKYSNRT), and 1266–1299 (PAVGYKLAFNYLKAKRYVDSIDICHQVLEAHPTY).

This sequence belongs to the TTC21 family. Component of the IFT complex A (IFT-A) complex. IFT-A complex is divided into a core subcomplex composed of IFT122:IFT140:WDR19 which is associated with TULP3 and a peripheral subcomplex composed of IFT43:WDR35:TTC21B. Interacts directy with WDR35 and TTC21B. Interacts with TTC25.

It is found in the cytoplasm. The protein resides in the cytoskeleton. It localises to the cilium axoneme. Functionally, component of the IFT complex A (IFT-A), a complex required for retrograde ciliary transport and entry into cilia of G protein-coupled receptors (GPCRs). Essential for retrograde trafficking of IFT-1, IFT-B and GPCRs. Negatively modulates the SHH signal transduction. The polypeptide is Tetratricopeptide repeat protein 21B (Homo sapiens (Human)).